The following is a 154-amino-acid chain: MPKVFEGHLLGQELKFGIVVGRFNEFITNKLLSGALDALKRHGVEDENVEIAYVPGAYEIPLVAKKMADSKRYDGVICLGAVIRGATPHFEYVSAEVSKGVAKISLDSNLPVIFGVLTVDTIEQAIERAGTKAGNKGWEAANAAIEMANLLKTI.

5-amino-6-(D-ribitylamino)uracil contacts are provided by residues phenylalanine 23, 57 to 59 (AYE), and 81 to 83 (AVI). Residue 86–87 (AT) coordinates (2S)-2-hydroxy-3-oxobutyl phosphate. Catalysis depends on histidine 89, which acts as the Proton donor. Phenylalanine 114 is a 5-amino-6-(D-ribitylamino)uracil binding site. Arginine 128 lines the (2S)-2-hydroxy-3-oxobutyl phosphate pocket.

It belongs to the DMRL synthase family.

The enzyme catalyses (2S)-2-hydroxy-3-oxobutyl phosphate + 5-amino-6-(D-ribitylamino)uracil = 6,7-dimethyl-8-(1-D-ribityl)lumazine + phosphate + 2 H2O + H(+). It functions in the pathway cofactor biosynthesis; riboflavin biosynthesis; riboflavin from 2-hydroxy-3-oxobutyl phosphate and 5-amino-6-(D-ribitylamino)uracil: step 1/2. Catalyzes the formation of 6,7-dimethyl-8-ribityllumazine by condensation of 5-amino-6-(D-ribitylamino)uracil with 3,4-dihydroxy-2-butanone 4-phosphate. This is the penultimate step in the biosynthesis of riboflavin. The chain is 6,7-dimethyl-8-ribityllumazine synthase from Desulforamulus reducens (strain ATCC BAA-1160 / DSM 100696 / MI-1) (Desulfotomaculum reducens).